Here is a 257-residue protein sequence, read N- to C-terminus: Snake venom serine protease KN9 (257 aa).

The first 18 residues, 1 to 18 (MVLIRVLANLLILQLSYA), serve as a signal peptide directing secretion. Positions 19–24 (QKSSEL) are excised as a propeptide. In terms of domain architecture, Peptidase S1 spans 25–248 (VVGGDECNIN…HLDWIKSIIA (224 aa)). 5 disulfide bridges follow: Cys31–Cys162, Cys49–Cys65, Cys141–Cys209, Cys173–Cys188, and Cys199–Cys224. The active-site Charge relay system is His64. Asn102 is a glycosylation site (N-linked (GlcNAc...) asparagine). Catalysis depends on Asp109, which acts as the Charge relay system. Residues Asn120 and Asn121 are each glycosylated (N-linked (GlcNAc...) asparagine). The active-site Charge relay system is the Ser203.

This sequence belongs to the peptidase S1 family. Snake venom subfamily. As to quaternary structure, monomer. As to expression, expressed by the venom gland.

It localises to the secreted. Functionally, snake venom serine protease that may act in the hemostasis system of the prey. This Trimeresurus stejnegeri (Chinese green tree viper) protein is Snake venom serine protease KN9.